We begin with the raw amino-acid sequence, 304 residues long: Glutaminase (304 aa).

S63, N113, E157, N164, Y188, Y240, and V258 together coordinate substrate.

This sequence belongs to the glutaminase family. In terms of assembly, homotetramer.

It catalyses the reaction L-glutamine + H2O = L-glutamate + NH4(+). The polypeptide is Glutaminase (Chromobacterium violaceum (strain ATCC 12472 / DSM 30191 / JCM 1249 / CCUG 213 / NBRC 12614 / NCIMB 9131 / NCTC 9757 / MK)).